The primary structure comprises 322 residues: Thioredoxin reductase (322 aa).

FAD contacts are provided by residues 12–15 (SGPA), 34–42 (EGAVTAGGA), Asn51, and Val84. Cys136 and Cys139 are joined by a disulfide. Positions 176, 182, and 259 each coordinate NADP(+). FAD-binding positions include Asp279 and 286–289 (RQAI). Arg286 is an NADP(+) binding site.

It belongs to the class-II pyridine nucleotide-disulfide oxidoreductase family. As to quaternary structure, homodimer. The cofactor is FAD.

The enzyme catalyses [thioredoxin]-dithiol + NADP(+) = [thioredoxin]-disulfide + NADPH + H(+). Component of the thioredoxin-thioredoxin reductase system which may be involved in biosynthesis of penicillins and cephalosporins and may be important in determining the thiol-disulfide redox balance. The polypeptide is Thioredoxin reductase (Streptomyces clavuligerus).